The following is a 257-amino-acid chain: MGRSPCCEKAHMNKGAWTKEEDQLLVDYIRKHGEGCWRSLPRAAGLQRCGKSCRLRWMNYLRPDLKRGNFTEEEDELIIKLHSLLGNKWSLIAGRLPGRTDNEIKNYWNTHIKRKLLSRGIDPNSHRLINESVVSPSSLQNDVVETIHLDFSGPVKPEPVREEIGMVNNCESSGTTSEKDYGNEEDWVLNLELSVGPSYRYESTRKVSVVDSAESTRRWGSELFGAHESDAVCLCCRIGLFRNESCRNCRVSDVRTH.

HTH myb-type domains follow at residues 9–61 and 62–116; these read KAHM…MNYL and RPDL…KRKL. 2 consecutive DNA-binding regions (H-T-H motif) follow at residues 37–61 and 89–112; these read WRSLPRAAGLQRCGKSCRLRWMNYL and WSLIAGRLPGRTDNEIKNYWNTHI. The Required for interaction with CPL1 signature appears at 189–193; the sequence is LNLEL.

As to quaternary structure, interacts with CPL1. As to expression, expressed in roots, stems, leaves, flowers and siliques.

The protein resides in the nucleus. This chain is Transcription factor MYB3 (MYB3), found in Arabidopsis thaliana (Mouse-ear cress).